We begin with the raw amino-acid sequence, 500 residues long: uncharacterized protein (500 aa).

Over residues 1–13 (MEPSQRSGSFSSI) the composition is skewed to low complexity. The segment at 1–23 (MEPSQRSGSFSSISRRRSRVDSR) is disordered. The residue at position 9 (Ser-9) is a Phosphoserine. The next 12 membrane-spanning stretches (helical) occupy residues 87–107 (VSIA…AVAL), 126–146 (LVIG…LCFA), 156–176 (LYFR…LLYC), 183–203 (WIYL…TFLY), 225–245 (MNIL…GILA), 261–281 (VASW…IFFF), 312–332 (FLLF…NGYQ), 351–371 (GNFI…SSFL), 380–400 (IMLG…VLDA), 408–428 (VYFF…APLI), 445–465 (IVVQ…GGAI), and 471–491 (VGFI…LIFM).

It belongs to the major facilitator superfamily.

The protein resides in the golgi apparatus. Its subcellular location is the membrane. This is an uncharacterized protein from Schizosaccharomyces pombe (strain 972 / ATCC 24843) (Fission yeast).